The chain runs to 385 residues: ATP phosphoribosyltransferase regulatory subunit (385 aa).

The protein belongs to the class-II aminoacyl-tRNA synthetase family. HisZ subfamily. As to quaternary structure, heteromultimer composed of HisG and HisZ subunits.

Its subcellular location is the cytoplasm. The protein operates within amino-acid biosynthesis; L-histidine biosynthesis; L-histidine from 5-phospho-alpha-D-ribose 1-diphosphate: step 1/9. In terms of biological role, required for the first step of histidine biosynthesis. May allow the feedback regulation of ATP phosphoribosyltransferase activity by histidine. This is ATP phosphoribosyltransferase regulatory subunit from Bordetella avium (strain 197N).